Reading from the N-terminus, the 172-residue chain is MERAEKREFVTELNEVFKASGSVVVAHYAGATVAQMNDFRSKMRAAGGTVKVAKNRLAKIALQGTDAEGISNLFTGQTLIAYSTDPITAPKVVVDFAKGNDKIVVLGGAMGTTTLNADGVKSLATLPSLDELRAKLLGMIQTPATRIAGVVAAPASQLARVFSAYAKKDEAA.

It belongs to the universal ribosomal protein uL10 family. As to quaternary structure, part of the ribosomal stalk of the 50S ribosomal subunit. The N-terminus interacts with L11 and the large rRNA to form the base of the stalk. The C-terminus forms an elongated spine to which L12 dimers bind in a sequential fashion forming a multimeric L10(L12)X complex.

Functionally, forms part of the ribosomal stalk, playing a central role in the interaction of the ribosome with GTP-bound translation factors. This chain is Large ribosomal subunit protein uL10, found in Rhizobium rhizogenes (strain K84 / ATCC BAA-868) (Agrobacterium radiobacter).